The primary structure comprises 1304 residues: Histone-lysine N-methyltransferase met-2 (1304 aa).

Residues 1–16 (MDQQEPSNNVDTSSIL) are compositionally biased toward polar residues. Residues 1–31 (MDQQEPSNNVDTSSILSDDGMETQEQSSFVT) form a disordered region. Residues 97–129 (NESEQEAVAAQRRVDAEKTAKDEAELKQQEEAE) are a coiled coil. One can recognise an MBD domain in the interval 834 to 909 (FHRNSPIHTP…FSFDARIDTA (76 aa)). The Pre-SET domain maps to 971–1049 (SGCSCDGDCS…SCYNRVVQNN (79 aa)). Residues cysteine 973, cysteine 975, cysteine 979, cysteine 985, cysteine 987, cysteine 1030, cysteine 1034, cysteine 1036, and cysteine 1041 each contribute to the Zn(2+) site. The SET domain occupies 1052–1277 (YPMHIFKTAQ…AGDELTWDYQ (226 aa)). Residues 1062-1064 (SGW), aspartate 1098, and tyrosine 1100 contribute to the S-adenosyl-L-methionine site. Basic and acidic residues predominate over residues 1113-1122 (EKGREDHETD). The segment at 1113-1201 (EKGREDHETD…DSMEKDNIES (89 aa)) is disordered. A compositionally biased stretch (acidic residues) spans 1128–1144 (DESDYDDEEGSDGDSGD). Basic and acidic residues predominate over residues 1152 to 1165 (KRQDSSESGEETKR). Residues 1166 to 1178 (LTRQKRKQSKKSG) are compositionally biased toward basic residues. The segment covering 1182–1201 (SVEKDDTTPRDSMEKDNIES) has biased composition (basic and acidic residues). S-adenosyl-L-methionine is bound by residues arginine 1231 and 1234–1235 (NH). Zn(2+)-binding residues include cysteine 1237, cysteine 1290, cysteine 1292, and cysteine 1297. One can recognise a Post-SET domain in the interval 1286-1302 (TQLTCHCGAENCTGRLL).

The protein belongs to the class V-like SAM-binding methyltransferase superfamily.

It is found in the nucleus. The protein localises to the chromosome. It localises to the cytoplasm. The enzyme catalyses N(6)-methyl-L-lysyl(9)-[histone H3] + S-adenosyl-L-methionine = N(6),N(6)-dimethyl-L-lysyl(9)-[histone H3] + S-adenosyl-L-homocysteine + H(+). It catalyses the reaction L-lysyl(9)-[histone H3] + S-adenosyl-L-methionine = N(6)-methyl-L-lysyl(9)-[histone H3] + S-adenosyl-L-homocysteine + H(+). Functionally, histone methyltransferase which is required for the mono- and dimethylation of 'Lys-9' of histone H3. This increases the efficiency of set-25-mediated trimethylation of histone H3 'Lys-9'. Involved in the transcriptional repression of lin-3 which is required for the negative regulation of vulval cell fate specification during postembryonic development. Has a role in blocking checkpoint signaling and mediating the transcriptional silencing of meiotic sex chromosome inactivation; a mechanism which enables checkpoint proteins to distinguish between the partnerless male X chromosome and asynapsed chromosomes thereby shielding the lone X from inappropriate activation of an apoptotic program. Operates redundantly with set-25 to position chromatin at the nuclear periphery. Required for small-RNA-induced H3K9 methylation. Together with set-25, protects and stabilizes repeat-rich genomic regions by suppressing transcription-induced replication stress through methylation of H3K9. Together with spr-5, required for transgenerational fertility. In Caenorhabditis elegans, this protein is Histone-lysine N-methyltransferase met-2 (met-2).